The chain runs to 200 residues: NADH-quinone oxidoreductase subunit B (200 aa).

[4Fe-4S] cluster-binding residues include cysteine 78, cysteine 79, cysteine 144, and cysteine 174.

This sequence belongs to the complex I 20 kDa subunit family. In terms of assembly, NDH-1 is composed of 14 different subunits. Subunits NuoB, C, D, E, F, and G constitute the peripheral sector of the complex. The cofactor is [4Fe-4S] cluster.

The protein resides in the cell membrane. It carries out the reaction a quinone + NADH + 5 H(+)(in) = a quinol + NAD(+) + 4 H(+)(out). Its function is as follows. NDH-1 shuttles electrons from NADH, via FMN and iron-sulfur (Fe-S) centers, to quinones in the respiratory chain. The immediate electron acceptor for the enzyme in this species is believed to be ubiquinone. Couples the redox reaction to proton translocation (for every two electrons transferred, four hydrogen ions are translocated across the cytoplasmic membrane), and thus conserves the redox energy in a proton gradient. In Dehalococcoides mccartyi (strain CBDB1), this protein is NADH-quinone oxidoreductase subunit B.